Reading from the N-terminus, the 49-residue chain is MSLYDYWVQFVSYIIGANAPEFLYVISFVLFIVLFFGMFFKLIQKMWSF.

A helical transmembrane segment spans residues leucine 23–isoleucine 43.

It localises to the host membrane. This is an uncharacterized protein from Spiroplasma melliferum (SpV1).